Reading from the N-terminus, the 286-residue chain is MKKFCLIFLLLALTALHVKGSPIPDEESEETEDAEQEEDAEEEEHAEEEAQEDGDQTQDTDQESDDGQEETANQGSDEQQEEDGSHGTDETDDEAAGSRTEDVESGGDEQNDGEENGSQENGEEVTGGEDDSHGAQDSEGGEEDAAAQEAGGKKSKGKGAKGGQGSNRAGSSSGGEESAAHTYQEVMRILNGIKINAKEPLKSRLVNGLQYLKVDTINRVENIQKFSRIEHCFGNLDHIVQLYAGDAVERNDYCKGTCIDMVSNEFRGQMEELTSRLYPCLQGGYY.

The N-terminal stretch at 1-20 (MKKFCLIFLLLALTALHVKG) is a signal peptide. The interval 17–179 (HVKGSPIPDE…GSSSGGEESA (163 aa)) is disordered. Composition is skewed to acidic residues over residues 24 to 69 (PDEE…DGQE) and 103 to 129 (VESG…TGGE). An N-linked (GlcNAc...) asparagine glycan is attached at N116. Low complexity predominate over residues 166–177 (SNRAGSSSGGEE).

The protein belongs to the aegyptin family. Monomeric in solution; likely has an elongated non-globular form. Interacts with human and rat collagens (via a RGQOGVMGF peptide, where O is hydroxyproline). In terms of processing, not glycosylated. As to expression, salivary gland.

It is found in the secreted. Functionally, inhibits host platelet aggregation induced by low concentrations of collagen via blocking the von Willebrand Factor (VWF) interaction with collagen. This is Simplagrin from Simulium nigrimanum (Black fly).